A 457-amino-acid polypeptide reads, in one-letter code: Acetylcholine receptor subunit alpha (457 aa).

The first 20 residues, Met1–Gly20, serve as a signal peptide directing secretion. At Ser21–Leu230 the chain is on the extracellular side. Intrachain disulfides connect Cys148-Cys162 and Cys212-Cys213. An N-linked (GlcNAc...) asparagine glycan is attached at Asn161. Transmembrane regions (helical) follow at residues Pro231–Leu255, Met263–Val281, and Tyr297–Ile316. Residues Asn317–His428 are Cytoplasmic-facing. A helical transmembrane segment spans residues Ile429–Ala447.

This sequence belongs to the ligand-gated ion channel (TC 1.A.9) family. Acetylcholine receptor (TC 1.A.9.1) subfamily. Alpha-1/CHRNA1 sub-subfamily. In terms of assembly, one of the alpha chains that assemble within the acetylcholine receptor, a pentamer of two alpha chains, a beta, a delta, and a gamma (in immature muscle) or epsilon (in mature muscle) chains. The muscle heteropentamer composed of alpha-1, beta-1, delta, epsilon subunits interacts with the alpha-conotoxin ImII.

The protein localises to the postsynaptic cell membrane. It is found in the cell membrane. It carries out the reaction K(+)(in) = K(+)(out). It catalyses the reaction Na(+)(in) = Na(+)(out). In terms of biological role, upon acetylcholine binding, the AChR responds by an extensive change in conformation that affects all subunits and leads to opening of an ion-conducting channel across the plasma membrane. This Bos taurus (Bovine) protein is Acetylcholine receptor subunit alpha (CHRNA1).